Reading from the N-terminus, the 485-residue chain is Phosphoglucosamine mutase (485 aa).

Serine 133 acts as the Phosphoserine intermediate in catalysis. 4 residues coordinate Mg(2+): serine 133, aspartate 274, aspartate 276, and aspartate 278. Position 133 is a phosphoserine (serine 133).

The protein belongs to the phosphohexose mutase family. The cofactor is Mg(2+). Post-translationally, activated by phosphorylation.

The catalysed reaction is alpha-D-glucosamine 1-phosphate = D-glucosamine 6-phosphate. Its function is as follows. Catalyzes the conversion of glucosamine-6-phosphate to glucosamine-1-phosphate. The chain is Phosphoglucosamine mutase from Crocosphaera subtropica (strain ATCC 51142 / BH68) (Cyanothece sp. (strain ATCC 51142)).